The following is a 494-amino-acid chain: MTSLVPGAGLLPIPTSSPLTAVSSLGVSLSSLGAIPAAALDPNITALGEIPQPPLMGNVDPSKIDEIRRTVYVGNLNSQTTTADQLLEFFKQVGEVKFVRMAGDETQPTRFAFVEFADQNSVPRALAFNGVMFGDRPLKINHSNNAIVKPPEMTPQAAAKELEEVMKRVREAQSFISAAIEPESGKSNERKGGRSRSHTRSKSRSSSKSHSRRKRSQSKHRSRSHNRSRSRQKDRARSKSPHKKRSKSRERRKSRSRSRSRDKRKDTREKVKERVKEREREKEKEREKEREKDKERGKNKDKDREKEKDHEKERDKEKEKEQDKDKEREKDRSKEADEKRKKEKKSRTPPRSYNSSRRSRSASRERRRRRSRSSSRSPRTSKTIKRKSSRSPSPRGRNKKEKKREKERDHISDRRERERSTSTKKSSSDRDGKEKVEKTNTPVKEKEHSKEADSTVSTDADEKDTARTEEESKAQHNGNCQPHEERLCSTADAV.

Residues 69-145 form the RRM domain; the sequence is RTVYVGNLNS…RPLKINHSNN (77 aa). A phosphoserine mark is found at serine 174 and serine 187. The interval 176-494 is disordered; it reads ISAAIEPESG…ERLCSTADAV (319 aa). A compositionally biased stretch (basic and acidic residues) spans 183–192; that stretch reads ESGKSNERKG. 2 stretches are compositionally biased toward basic residues: residues 193–230 and 238–262; these read GRSR…RSRS and SKSP…RSRD. The segment covering 263 to 340 has biased composition (basic and acidic residues); that stretch reads KRKDTREKVK…DRSKEADEKR (78 aa). Threonine 348 carries the post-translational modification Phosphothreonine. Residues 357-373 show a composition bias toward basic residues; it reads RRSRSASRERRRRRSRS. Composition is skewed to basic and acidic residues over residues 404–453 and 463–474; these read REKE…KEAD and KDTARTEEESKA.

It belongs to the splicing factor SR family. As to quaternary structure, interacts with SREK1IP1. Homodimer. Binds SFRS1, SFRS2, SFRS3 and SFRS6. Interacts with the spliceosome. In terms of tissue distribution, ubiquitous. Detected in liver, brain, lung, spleen, testis and pancreas.

The protein resides in the nucleus. Its function is as follows. Participates in the regulation of alternative splicing by modulating the activity of other splice facors. Inhibits the splicing activity of SFRS1, SFRS2 and SFRS6. Augments the splicing activity of SFRS3. In Rattus norvegicus (Rat), this protein is Splicing regulatory glutamine/lysine-rich protein 1 (Srek1).